Here is a 386-residue protein sequence, read N- to C-terminus: Succinate--CoA ligase [ADP-forming] subunit beta (386 aa).

Residues lysine 9–glutamate 244 form the ATP-grasp domain. ATP is bound by residues lysine 46, glycine 53 to glycine 55, glutamate 99, alanine 102, and glutamate 107. Mg(2+) contacts are provided by asparagine 199 and aspartate 213. Residues asparagine 264 and glycine 321–methionine 323 contribute to the substrate site.

Belongs to the succinate/malate CoA ligase beta subunit family. Heterotetramer of two alpha and two beta subunits. The cofactor is Mg(2+).

The enzyme catalyses succinate + ATP + CoA = succinyl-CoA + ADP + phosphate. It catalyses the reaction GTP + succinate + CoA = succinyl-CoA + GDP + phosphate. It functions in the pathway carbohydrate metabolism; tricarboxylic acid cycle; succinate from succinyl-CoA (ligase route): step 1/1. Functionally, succinyl-CoA synthetase functions in the citric acid cycle (TCA), coupling the hydrolysis of succinyl-CoA to the synthesis of either ATP or GTP and thus represents the only step of substrate-level phosphorylation in the TCA. The beta subunit provides nucleotide specificity of the enzyme and binds the substrate succinate, while the binding sites for coenzyme A and phosphate are found in the alpha subunit. The polypeptide is Succinate--CoA ligase [ADP-forming] subunit beta (Acidovorax ebreus (strain TPSY) (Diaphorobacter sp. (strain TPSY))).